The sequence spans 518 residues: Equilibrative nucleoside transporter 4 (518 aa).

Basic and acidic residues predominate over residues 1–10; sequence MGSKGAERRK. Residues 1 to 21 form a disordered region; it reads MGSKGAERRKQATPGQTPEGN. The Extracellular portion of the chain corresponds to 1–66; it reads MGSKGAERRK…EEAVPDDRYH (66 aa). A helical transmembrane segment spans residues 67-87; sequence GIYFAMLLAGVGFLLPYNSFI. The Cytoplasmic segment spans residues 88 to 99; that stretch reads TDVDYLHHKFEG. A helical transmembrane segment spans residues 100 to 120; it reads TSIVFDMGLTYILVALVAVIL. Residues 121 to 133 lie on the Extracellular side of the membrane; that stretch reads NNVLVEMLSLHTR. A helical membrane pass occupies residues 134–154; the sequence is ITVGYLFALGPLLFVTIFDVW. Residues 155–157 are Cytoplasmic-facing; sequence LER. The helical transmembrane segment at 158-178 threads the bilayer; the sequence is FTIKQAYVINLMSMGTVAFGC. Residues 179–198 are Extracellular-facing; sequence TVQQSSFYGYMGMLPKRYTQ. The chain crosses the membrane as a helical span at residues 199-218; that stretch reads GVMTGESTAGVIISLSRIFT. The Cytoplasmic portion of the chain corresponds to 219–229; it reads KLLIKDERKNT. Residues 230 to 250 traverse the membrane as a helical segment; the sequence is IIFFVISICMVLVCFILHLLV. Over 251 to 342 the chain is Extracellular; that stretch reads RRTRFVQYYT…MILHRYVVAR (92 aa). A helical transmembrane segment spans residues 343–363; the sequence is VIWTYMLSIAVTYFITLCLFP. Topologically, residues 364-376 are cytoplasmic; it reads GLESEIKNATLGE. Residues 377-397 traverse the membrane as a helical segment; that stretch reads WLPILIMAIFNISDFVGKILA. At 398–407 the chain is on the extracellular side; sequence AVPYEWNGTR. A helical membrane pass occupies residues 408 to 428; it reads LLFFSCVRVVFIPLFIMCVYP. Topologically, residues 429-439 are cytoplasmic; sequence AQMPMFSHPAW. The helical transmembrane segment at 440 to 460 threads the bilayer; that stretch reads PCIFSLFMGITNGYFGSVPMI. At 461–476 the chain is on the extracellular side; the sequence is HAAGKVAPEQRELAGN. A helical membrane pass occupies residues 477–497; the sequence is IMTVSYMSGLMLGSVVAYAAY. Topologically, residues 498–518 are cytoplasmic; it reads SFTASGSSFHSQTGYNFTQGY.

It belongs to the SLC29A/ENT transporter (TC 2.A.57) family.

It is found in the membrane. In terms of biological role, functions as a polyspecific organic cation transporter, efficiently transporting many organic cations such as monoamine neurotransmitters 1-methyl-4-phenylpyridinium and biogenic amines including serotonin, dopamine, norepinephrine and epinephrine. May play a role in regulating central nervous system homeostasis of monoamine neurotransmitters. May be involved in luminal transport of organic cations in the kidney and seems to use luminal proton gradient to drive organic cation reabsorption. Does not seem to transport nucleoside and nucleoside analogs such as uridine, cytidine, thymidine, adenosine, inosine, guanosine, and azidothymidine. The chain is Equilibrative nucleoside transporter 4 (slc29a4) from Danio rerio (Zebrafish).